Reading from the N-terminus, the 107-residue chain is Prostate collagen triple helix protein (107 aa).

The segment at 47–107 is disordered; sequence PLIPRTPGSP…PTSPLFPFCP (61 aa). A compositionally biased stretch (low complexity) spans 81 to 100; it reads VGPKGPMLPLGPSGPVGPTS.

Expressed in prostate and testis. Weakly or not expressed in other tissues. Overexpressed in prostate cancers.

The protein resides in the cytoplasm. In terms of biological role, may be involved in growth and survival of prostate cancer cells through the TAF-Ibeta pathway. In Homo sapiens (Human), this protein is Prostate collagen triple helix protein (PCOTH).